A 418-amino-acid chain; its full sequence is Secreted beta-glucosidase SUN41 (418 aa).

The signal sequence occupies residues 1 to 23; sequence MRFSQATVLAFAALSLAAPAFEA. Over residues 81–97 the composition is skewed to low complexity; sequence SEETSSTSTSISSTTTI. The segment at 81–150 is disordered; sequence SEETSSTSTS…SGSTNGIEGD (70 aa). N-linked (GlcNAc...) asparagine glycosylation occurs at Asn100. A compositionally biased stretch (polar residues) spans 112 to 126; the sequence is SLPSGTIKPSSFATE. A compositionally biased stretch (low complexity) spans 127–136; the sequence is SQSQSQSSST.

Belongs to the SUN family. Predicted to be a substrate for cleavage by KEX2.

The protein localises to the secreted. It localises to the cell wall. In terms of biological role, cell surface beta-glucosidase involved in cytokinesis, cell wall biogenesis, adhesion to host tissue, and biofilm formation; thus playing an important role in the host-pathogen interaction. Has hydrolytic activity on linear (1-&gt;3)-beta-D-glucans such as laminaribiose and other laminarioligosaccharides. This chain is Secreted beta-glucosidase SUN41, found in Candida albicans (strain SC5314 / ATCC MYA-2876) (Yeast).